The following is a 103-amino-acid chain: UPF0145 protein HH_1800 (103 aa).

This sequence belongs to the UPF0145 family.

This is UPF0145 protein HH_1800 from Helicobacter hepaticus (strain ATCC 51449 / 3B1).